Consider the following 128-residue polypeptide: Histone H2A type 1-J (128 aa).

The disordered stretch occupies residues Met1–Ala22. N-acetylserine is present on Ser2. At Ser2 the chain carries Phosphoserine; by RPS6KA5. Citrulline; alternate is present on Arg4. At Arg4 the chain carries Symmetric dimethylarginine; by PRMT5; alternate. The residue at position 6 (Lys6) is an N6-(2-hydroxyisobutyryl)lysine. Residues Gln7–Ser19 are compositionally biased toward basic residues. Lys10 carries the post-translational modification N6-(2-hydroxyisobutyryl)lysine; alternate. Residues Lys10 and Lys14 each carry the N6-(beta-hydroxybutyryl)lysine; alternate modification. Lys10 bears the N6-lactoyllysine; alternate mark. The residue at position 10 (Lys10) is an N6-succinyllysine; alternate. Residue Lys14 forms a Glycyl lysine isopeptide (Lys-Gly) (interchain with G-Cter in ubiquitin); alternate linkage. Lys16 is covalently cross-linked (Glycyl lysine isopeptide (Lys-Gly) (interchain with G-Cter in ubiquitin)). N6-(2-hydroxyisobutyryl)lysine; alternate is present on Lys37. Position 37 is an N6-(beta-hydroxybutyryl)lysine; alternate (Lys37). N6-crotonyllysine; alternate is present on Lys37. Lys75 and Lys76 each carry N6-(2-hydroxyisobutyryl)lysine. Lys96 is subject to N6-(2-hydroxyisobutyryl)lysine; alternate. Residue Lys96 is modified to N6-(beta-hydroxybutyryl)lysine; alternate. Lys96 bears the N6-succinyllysine; alternate mark. Lys96 carries the post-translational modification N6-glutaryllysine; alternate. Lys100 carries the N6-glutaryllysine modification. Position 105 is an N5-methylglutamine (Gln105). Lys119 carries the N6-(2-hydroxyisobutyryl)lysine; alternate modification. Lys119 carries the N6-(beta-hydroxybutyryl)lysine; alternate modification. Residues Lys119 and Lys120 each carry the N6-crotonyllysine; alternate modification. N6-glutaryllysine; alternate occurs at positions 119 and 120. Lys120 is covalently cross-linked (Glycyl lysine isopeptide (Lys-Gly) (interchain with G-Cter in ubiquitin); alternate). Phosphothreonine; by DCAF1 is present on Thr121. Lys126 is subject to N6-crotonyllysine; alternate. Position 126 is an N6-glutaryllysine; alternate (Lys126).

This sequence belongs to the histone H2A family. In terms of assembly, the nucleosome is a histone octamer containing two molecules each of H2A, H2B, H3 and H4 assembled in one H3-H4 heterotetramer and two H2A-H2B heterodimers. The octamer wraps approximately 147 bp of DNA. Post-translationally, deiminated on Arg-4 in granulocytes upon calcium entry. In terms of processing, monoubiquitination of Lys-120 (H2AK119Ub) by RING1, TRIM37 and RNF2/RING2 complex gives a specific tag for epigenetic transcriptional repression and participates in X chromosome inactivation of female mammals. It is involved in the initiation of both imprinted and random X inactivation. Ubiquitinated H2A is enriched in inactive X chromosome chromatin. Ubiquitination of H2A functions downstream of methylation of 'Lys-27' of histone H3 (H3K27me). H2AK119Ub by RNF2/RING2 can also be induced by ultraviolet and may be involved in DNA repair. Monoubiquitination of Lys-120 (H2AK119Ub) by TRIM37 may promote transformation of cells in a number of breast cancers. Following DNA double-strand breaks (DSBs), it is ubiquitinated through 'Lys-63' linkage of ubiquitin moieties by the E2 ligase UBE2N and the E3 ligases RNF8 and RNF168, leading to the recruitment of repair proteins to sites of DNA damage. Ubiquitination at Lys-14 and Lys-16 (H2AK13Ub and H2AK15Ub, respectively) in response to DNA damage is initiated by RNF168 that mediates monoubiquitination at these 2 sites, and 'Lys-63'-linked ubiquitin are then conjugated to monoubiquitin; RNF8 is able to extend 'Lys-63'-linked ubiquitin chains in vitro. Deubiquitinated by USP51 at Lys-14 and Lys-16 (H2AK13Ub and H2AK15Ub, respectively) after damaged DNA is repaired. H2AK119Ub and ionizing radiation-induced 'Lys-63'-linked ubiquitination (H2AK13Ub and H2AK15Ub) are distinct events. Phosphorylation on Ser-2 (H2AS1ph) is enhanced during mitosis. Phosphorylation on Ser-2 by RPS6KA5/MSK1 directly represses transcription. Acetylation of H3 inhibits Ser-2 phosphorylation by RPS6KA5/MSK1. Phosphorylation at Thr-121 (H2AT120ph) by DCAF1 is present in the regulatory region of many tumor suppresor genes and down-regulates their transcription. Post-translationally, glutamine methylation at Gln-105 (H2AQ104me) by FBL is specifically dedicated to polymerase I. It is present at 35S ribosomal DNA locus and impairs binding of the FACT complex. In terms of processing, symmetric dimethylation on Arg-4 by the PRDM1/PRMT5 complex may play a crucial role in the germ-cell lineage. Crotonylation (Kcr) is specifically present in male germ cells and marks testis-specific genes in post-meiotic cells, including X-linked genes that escape sex chromosome inactivation in haploid cells. Crotonylation marks active promoters and enhancers and confers resistance to transcriptional repressors. It is also associated with post-meiotically activated genes on autosomes. Post-translationally, lactylated in macrophages by EP300/P300 by using lactoyl-CoA directly derived from endogenous or exogenous lactate, leading to stimulates gene transcription.

Its subcellular location is the nucleus. It localises to the chromosome. Core component of nucleosome. Nucleosomes wrap and compact DNA into chromatin, limiting DNA accessibility to the cellular machineries which require DNA as a template. Histones thereby play a central role in transcription regulation, DNA repair, DNA replication and chromosomal stability. DNA accessibility is regulated via a complex set of post-translational modifications of histones, also called histone code, and nucleosome remodeling. This is Histone H2A type 1-J from Homo sapiens (Human).